The following is a 245-amino-acid chain: Thiopurine S-methyltransferase (245 aa).

Phosphoserine is present on S14. 29–40 (WREKWVDGKIGF) provides a ligand contact to S-adenosyl-L-methionine. Residue F40 participates in substrate binding. The residue at position 58 (K58) is an N6-acetyllysine. S-adenosyl-L-methionine contacts are provided by L69, E90, and R152.

Belongs to the class I-like SAM-binding methyltransferase superfamily. TPMT family. As to quaternary structure, monomer.

The protein resides in the cytoplasm. The catalysed reaction is S-adenosyl-L-methionine + a thiopurine = S-adenosyl-L-homocysteine + a thiopurine S-methylether.. The sequence is that of Thiopurine S-methyltransferase (TPMT) from Panthera tigris (Tiger).